The primary structure comprises 503 residues: Probable DNA double-strand break repair helicase HerA (503 aa).

ATP is bound by residues Arg-122, 131–136, and 478–479; these read GGGKSN and KI.

The protein belongs to the HerA family.

It catalyses the reaction Couples ATP hydrolysis with the unwinding of duplex DNA at the replication fork by translocating in the 5'-3' direction. This creates two antiparallel DNA single strands (ssDNA). The leading ssDNA polymer is the template for DNA polymerase III holoenzyme which synthesizes a continuous strand.. The catalysed reaction is ATP + H2O = ADP + phosphate + H(+). It carries out the reaction Couples ATP hydrolysis with the unwinding of duplex DNA by translocating in the 3'-5' direction.. Functionally, involved in DNA double-strand break (DSB) repair. Probably acts with NurA to stimulate resection of the 5' strand and produce the long 3' single-strand that is required for RadA loading. Has DNA-dependent ATPase activity and DNA helicase activity. The chain is Probable DNA double-strand break repair helicase HerA from Methanocaldococcus jannaschii (strain ATCC 43067 / DSM 2661 / JAL-1 / JCM 10045 / NBRC 100440) (Methanococcus jannaschii).